The following is a 78-amino-acid chain: Large ribosomal subunit protein bL28 (78 aa).

It belongs to the bacterial ribosomal protein bL28 family.

This is Large ribosomal subunit protein bL28 from Thioalkalivibrio sulfidiphilus (strain HL-EbGR7).